The chain runs to 129 residues: Small ribosomal subunit protein uS11 (129 aa).

Belongs to the universal ribosomal protein uS11 family. As to quaternary structure, part of the 30S ribosomal subunit. Interacts with proteins S7 and S18. Binds to IF-3.

Functionally, located on the platform of the 30S subunit, it bridges several disparate RNA helices of the 16S rRNA. Forms part of the Shine-Dalgarno cleft in the 70S ribosome. The protein is Small ribosomal subunit protein uS11 of Staphylococcus carnosus (strain TM300).